Reading from the N-terminus, the 414-residue chain is Isocitrate dehydrogenase [NADP] cytoplasmic (414 aa).

Ser-2 carries the N-acetylserine modification. The residue at position 42 (Tyr-42) is a Phosphotyrosine. Position 75–77 (75–77) interacts with NADP(+); the sequence is TIT. Residue Thr-77 participates in substrate binding. At Lys-81 the chain carries N6-acetyllysine. Arg-82 contacts NADP(+). Residues 94-100 and Arg-109 each bind substrate; that span reads SPNGTIR. At Lys-126 the chain carries N6-succinyllysine. 2 residues coordinate substrate: Arg-132 and Lys-212. An N6-acetyllysine mark is found at Lys-224, Lys-233, and Lys-243. A Mn(2+)-binding site is contributed by Asp-252. Lys-260 contacts NADP(+). 2 residues coordinate Mn(2+): Asp-275 and Asp-279. Residue 310–315 participates in NADP(+) binding; sequence GTVTRH. At Lys-321 the chain carries N6-acetyllysine. Asn-328 provides a ligand contact to NADP(+). Ser-389 is modified (phosphoserine). An N6-succinyllysine modification is found at Lys-400.

Belongs to the isocitrate and isopropylmalate dehydrogenases family. Homodimer. Mg(2+) is required as a cofactor. It depends on Mn(2+) as a cofactor. Post-translationally, acetylation at Lys-374 dramatically reduces catalytic activity.

It is found in the cytoplasm. Its subcellular location is the cytosol. The protein resides in the peroxisome. The enzyme catalyses D-threo-isocitrate + NADP(+) = 2-oxoglutarate + CO2 + NADPH. Functionally, catalyzes the NADP(+)-dependent oxidative decarboxylation of isocitrate (D-threo-isocitrate) to 2-ketoglutarate (2-oxoglutarate), which is required by other enzymes such as the phytanoyl-CoA dioxygenase. Plays a critical role in the generation of NADPH, an important cofactor in many biosynthesis pathways. May act as a corneal epithelial crystallin and may be involved in maintaining corneal epithelial transparency. This is Isocitrate dehydrogenase [NADP] cytoplasmic (IDH1) from Homo sapiens (Human).